A 69-amino-acid polypeptide reads, in one-letter code: Large ribosomal subunit protein uL29 (69 aa).

The protein belongs to the universal ribosomal protein uL29 family.

The sequence is that of Large ribosomal subunit protein uL29 from Rhodospirillum centenum (strain ATCC 51521 / SW).